The primary structure comprises 895 residues: Androgen receptor (895 aa).

The modulating stretch occupies residues M1 to K533. The tract at residues M1–A562 is interaction with ZNF318. Disordered regions lie at residues V33–L150 and Q178–G211. 2 stretches are compositionally biased toward low complexity: residues A44–Q81 and Q178–A200. At S65 the chain carries Phosphoserine; by CDK9. S79 carries the phosphoserine modification. Residues P201–G211 are compositionally biased toward polar residues. At Y208 the chain carries Phosphotyrosine; by CSK. S241 carries the phosphoserine modification. Position 252 is a phosphotyrosine; by CSK and TNK2 (Y252). A phosphotyrosine; by CSK mark is found at Y292, Y331, Y342, and Y347. Y348 carries the post-translational modification Phosphotyrosine; by CSK and TNK2. K371 participates in a covalent cross-link: Glycyl lysine isopeptide (Lys-Gly) (interchain with G-Cter in SUMO). Y378 carries the post-translational modification Phosphotyrosine; by CSK. K496 participates in a covalent cross-link: Glycyl lysine isopeptide (Lys-Gly) (interchain with G-Cter in SUMO). Phosphotyrosine; by CSK is present on residues Y510 and Y527. Positions Y527–T894 are interaction with LPXN. The segment at residues T534–L607 is a DNA-binding region (nuclear receptor). 2 NR C4-type zinc fingers span residues C535–C555 and C571–C595. The interaction with HIPK3 stretch occupies residues Y547–V637. The segment at Q567–T894 is interaction with CCAR1. The interval M600 to T894 is interaction with KAT7. Phosphoserine; by STK4/MST1 is present on S626. An NR LBD domain is found at E644 to I875. 2 residues coordinate 17beta-hydroxy-5alpha-androstan-3-one: N681 and R728. Residues K821 and K823 each participate in a glycyl lysine isopeptide (Lys-Gly) (interchain with G-Cter in ubiquitin) cross-link. Residue T853 coordinates 17beta-hydroxy-5alpha-androstan-3-one. A Phosphotyrosine; by CSK modification is found at Y891.

Belongs to the nuclear hormone receptor family. NR3 subfamily. In terms of assembly, binds DNA as a homodimer. Part of a ternary complex containing AR, EFCAB6/DJBP and PARK7. Interacts with HIPK3 and NR0B2 in the presence of androgen. The ligand binding domain interacts with KAT7/HBO1 in the presence of dihydrotestosterone. Interacts with EFCAB6/DJBP, PQBP1, RANBP9, RBAK, SPDEF, SRA1, TGFB1I1 and RREB1. Interacts with ZMIZ1/ZIMP10 and ZMIZ2/ZMIP7 which both enhance its transactivation activity. Interacts with SLC30A9 and RAD54L2/ARIP4. Interacts with MACROD1 (via macro domain). Interacts via the ligand-binding domain with LXXLL and FXXLF motifs from NCOA1, NCOA2, NCOA3 and MAGEA11. Interacts (via nuclear receptor DNA binding domain and nuclear receptor ligand binding domain) with NCOA4. The AR N-terminal poly-Gln region binds Ran resulting in enhancement of AR-mediated transactivation. Ran-binding decreases as the poly-Gln length increases. Interacts with HIP1 (via coiled coil domain). Interacts (via ligand-binding domain) with TRIM68. Interacts with TNK2. Interacts with USP26. Interacts with RNF6. Interacts (regulated by RNF6 probably through polyubiquitination) with RNF14; regulates AR transcriptional activity. Interacts with PRMT2 and TRIM24. Interacts with RACK1. Interacts with RANBP10; this interaction enhances dihydrotestosterone-induced AR transcriptional activity. Interacts with PRPF6 in a hormone-independent way; this interaction enhances dihydrotestosterone-induced AR transcriptional activity. Interacts with STK4/MST1. Interacts with ZIPK/DAPK3. Interacts with LPXN. Interacts with MAK. Part of a complex containing AR, MAK and NCOA3. Interacts with CRY1. Interacts with CCAR1 and GATA2. Interacts with ZNF318. Interacts with BUD31. Interacts with ARID4A. Interacts with ARID4B. Interacts (via NR LBD domain) with ZBTB7A; the interaction is direct and androgen-dependent. Interacts with NCOR1. Interacts with NCOR2. Interacts with CRY2 in a ligand-dependent manner. In terms of processing, phosphorylated in prostate cancer cells in response to several growth factors including EGF. Phosphorylation is induced by c-Src kinase (CSK). Tyr-510 is one of the major phosphorylation sites and an increase in phosphorylation and Src kinase activity is associated with prostate cancer progression. Phosphorylation by TNK2 enhances the DNA-binding and transcriptional activity. Phosphorylation at Ser-65 by CDK9 regulates AR promoter selectivity and cell growth. Post-translationally, sumoylated on Lys-371 (major) and Lys-496. Ubiquitinated. Deubiquitinated by USP26. 'Lys-6' and 'Lys-27'-linked polyubiquitination by RNF6 modulates AR transcriptional activity and specificity. Palmitoylated by ZDHHC7 and ZDHHC21. Palmitoylation is required for plasma membrane targeting and for rapid intracellular signaling via ERK and AKT kinases and cAMP generation.

The protein localises to the nucleus. It is found in the cytoplasm. In terms of biological role, steroid hormone receptors are ligand-activated transcription factors that regulate eukaryotic gene expression and affect cellular proliferation and differentiation in target tissues. Transcription factor activity is modulated by bound coactivator and corepressor proteins like ZBTB7A that recruits NCOR1 and NCOR2 to the androgen response elements/ARE on target genes, negatively regulating androgen receptor signaling and androgen-induced cell proliferation. Transcription activation is also down-regulated by NR0B2. Activated, but not phosphorylated, by HIPK3 and ZIPK/DAPK3. The sequence is that of Androgen receptor (AR) from Macaca mulatta (Rhesus macaque).